Consider the following 335-residue polypeptide: Ketol-acid reductoisomerase (NADP(+)) 2 (335 aa).

One can recognise a KARI N-terminal Rossmann domain in the interval 1 to 180 (MKTYYEKDAN…GCTRAGVIET (180 aa)). Residues 24 to 27 (YGSQ), arginine 47, serine 51, and 81 to 84 (DEQQ) contribute to the NADP(+) site. The active site involves histidine 106. Glycine 132 serves as a coordination point for NADP(+). Residues 181 to 326 (TFQEETETDL…AELREMMSWI (146 aa)) enclose the KARI C-terminal knotted domain. Mg(2+)-binding residues include aspartate 189, glutamate 193, glutamate 225, and glutamate 229. Serine 250 contributes to the substrate binding site.

This sequence belongs to the ketol-acid reductoisomerase family. It depends on Mg(2+) as a cofactor.

The catalysed reaction is (2R)-2,3-dihydroxy-3-methylbutanoate + NADP(+) = (2S)-2-acetolactate + NADPH + H(+). It catalyses the reaction (2R,3R)-2,3-dihydroxy-3-methylpentanoate + NADP(+) = (S)-2-ethyl-2-hydroxy-3-oxobutanoate + NADPH + H(+). It functions in the pathway amino-acid biosynthesis; L-isoleucine biosynthesis; L-isoleucine from 2-oxobutanoate: step 2/4. The protein operates within amino-acid biosynthesis; L-valine biosynthesis; L-valine from pyruvate: step 2/4. In terms of biological role, involved in the biosynthesis of branched-chain amino acids (BCAA). Catalyzes an alkyl-migration followed by a ketol-acid reduction of (S)-2-acetolactate (S2AL) to yield (R)-2,3-dihydroxy-isovalerate. In the isomerase reaction, S2AL is rearranged via a Mg-dependent methyl migration to produce 3-hydroxy-3-methyl-2-ketobutyrate (HMKB). In the reductase reaction, this 2-ketoacid undergoes a metal-dependent reduction by NADPH to yield (R)-2,3-dihydroxy-isovalerate. The polypeptide is Ketol-acid reductoisomerase (NADP(+)) 2 (Bacillus cereus (strain ZK / E33L)).